Here is a 432-residue protein sequence, read N- to C-terminus: Homogentisate 1,2-dioxygenase (432 aa).

The active-site Proton acceptor is His-287. Fe cation is bound by residues His-330 and Glu-336. The homogentisate site is built by Tyr-345 and His-366. His-366 is a Fe cation binding site.

This sequence belongs to the homogentisate dioxygenase family. As to quaternary structure, hexamer; dimer of trimers. Requires Fe cation as cofactor.

It catalyses the reaction homogentisate + O2 = 4-maleylacetoacetate + H(+). It functions in the pathway amino-acid degradation; L-phenylalanine degradation; acetoacetate and fumarate from L-phenylalanine: step 4/6. Its function is as follows. Involved in the catabolism of homogentisate (2,5-dihydroxyphenylacetate or 2,5-OH-PhAc), a central intermediate in the degradation of phenylalanine and tyrosine. Catalyzes the oxidative ring cleavage of the aromatic ring of homogentisate to yield maleylacetoacetate. The sequence is that of Homogentisate 1,2-dioxygenase from Pseudomonas aeruginosa (strain ATCC 15692 / DSM 22644 / CIP 104116 / JCM 14847 / LMG 12228 / 1C / PRS 101 / PAO1).